The chain runs to 260 residues: Trialysin (260 aa).

The signal sequence occupies residues 1–19 (MSKFWLLLLLVAAFQFAHS). Positions 20–55 (YPAAEYELDETTNDEVRQFIGDGYFEDEGDDGDEER) are cleaved as a propeptide — removed in mature form, probably by the serine protease triapsin.

The protein belongs to the redulysin-like family. In terms of tissue distribution, expressed in salivary glands.

The protein resides in the secreted. The protein localises to the target cell membrane. In terms of biological role, pore-forming protein that induces lysis of T.cruzi trypomastigotes, bacteria E.coli and human red blood cells. The parasite lysis is much more important than the hemolysis, probably due to difference in membrane composition. Its action on protozoan parasites and bacteria may indicate a role in the control of microorganism growth in the salivary glands. This is Trialysin from Triatoma infestans (Assassin bug).